The sequence spans 251 residues: Cell division protein ZapD (251 aa).

It belongs to the ZapD family. As to quaternary structure, interacts with FtsZ.

It is found in the cytoplasm. Cell division factor that enhances FtsZ-ring assembly. Directly interacts with FtsZ and promotes bundling of FtsZ protofilaments, with a reduction in FtsZ GTPase activity. The sequence is that of Cell division protein ZapD from Nitrosomonas eutropha (strain DSM 101675 / C91 / Nm57).